A 309-amino-acid polypeptide reads, in one-letter code: Serine/threonine-protein phosphatase 2A catalytic subunit alpha isoform (309 aa).

Residues aspartate 57, histidine 59, aspartate 85, and asparagine 117 each coordinate Mn(2+). Residues aspartate 57, histidine 59, and aspartate 85 each contribute to the Zn(2+) site. The Fe(3+) site is built by aspartate 85 and asparagine 117. The Proton donor role is filled by histidine 118. Mn(2+) contacts are provided by histidine 167 and histidine 241. The Fe(3+) site is built by histidine 167 and histidine 241. A Phosphotyrosine modification is found at tyrosine 307. At leucine 309 the chain carries Leucine methyl ester.

This sequence belongs to the PPP phosphatase family. PP-1 subfamily. PP2A consists of a common heterodimeric core enzyme composed of PPP2CA, a 36 kDa catalytic subunit (subunit C), and PPP2R1A, a 65 kDa constant regulatory subunit (PR65 or subunit A), that associates with a variety of regulatory subunits. Proteins that associate with the core dimer include three families of regulatory subunits B (the R2/B/PR55/B55, R3/B''/PR72/PR130/PR59 and R5/B'/B56 families), the 48 kDa variable regulatory subunit, viral proteins, and cell signaling molecules. Interacts with the PP2A A subunit PPP2R1A. Interacts with the regulatory subunit PPP2R2A. Interacts (via C-terminus) with PTPA. Interacts with NXN; the interaction is direct. Interacts with KCTD20. Interacts with BTBD10. Interacts with SGO1 and SGO2. Interacts with RAF1. Interaction with IGBP1 protects unassembled PPP2CA from degradative ubiquitination. Interacts with GSK3B (via C2 domain). Interacts with MFHAS1; retains PPP2CA into the cytoplasm and excludes it from the nucleus. Interacts with PABIR1/FAM122A. Interacts with ADCY8; interaction is phosphatase activity-dependent; antagonizes interaction between ADCY8 and calmodulin. Interacts with CRTC3 (when phosphorylated at 'Ser-391'). Interacts with SPRY2; the interaction is inhibited by TESK1 interaction with SPRY2, possibly by vesicular sequestration of SPRY2. Interacts with TRAF3IP3. Interacts with AMBRA1 (via PxP motifs); enhancing interaction between PPP2CA and MYC or FOXO3. Forms a complex with AMBRA1 and BECN1; AMBRA1 and BECN1 components of the complex regulate MYC stability via different pathways. Part of the core of STRIPAK complexes composed of PP2A catalytic and scaffolding subunits, the striatins (PP2A regulatory subunits), the striatin-associated proteins MOB4, STRIP1 and STRIP2, PDCD10 and members of the STE20 kinases, such as STK24 and STK26. Phosphatase component of the Integrator-PP2A (INTAC) complex, composed of the Integrator core complex and protein phosphatase 2A subunits PPP2CA and PPP2R1A. Mn(2+) is required as a cofactor. Requires Fe(3+) as cofactor. The cofactor is Zn(2+). Post-translationally, reversibly methyl esterified on Leu-309 by leucine carboxyl methyltransferase 1 (LCMT1) and protein phosphatase methylesterase 1 (PPME1). Carboxyl methylation influences the affinity of the catalytic subunit for the different regulatory subunits, thereby modulating the PP2A holoenzyme's substrate specificity, enzyme activity and cellular localization. Phosphorylation of either threonine (by autophosphorylation-activated protein kinase) or tyrosine results in inactivation of the phosphatase. Auto-dephosphorylation has been suggested as a mechanism for reactivation. In terms of processing, polyubiquitinated, leading to its degradation by the proteasome.

It is found in the cytoplasm. The protein resides in the nucleus. Its subcellular location is the chromosome. It localises to the centromere. The protein localises to the cytoskeleton. It is found in the spindle pole. It carries out the reaction O-phospho-L-seryl-[protein] + H2O = L-seryl-[protein] + phosphate. It catalyses the reaction O-phospho-L-threonyl-[protein] + H2O = L-threonyl-[protein] + phosphate. Inhibited by the interaction between PPP2R2A and ARPP19; this inhibition is enhanced when ARPP19 is phosphorylated. Inhibited by the interaction between PPP2R2A and PABIR1/FAM122A. Catalytic subunit of protein phosphatase 2A (PP2A), a serine/threonine phosphatase involved in the regulation of a wide variety of enzymes, signal transduction pathways, and cellular events. PP2A is the major phosphatase for microtubule-associated proteins (MAPs). PP2A can modulate the activity of phosphorylase B kinase casein kinase 2, mitogen-stimulated S6 kinase, and MAP-2 kinase. Cooperates with SGO2 to protect centromeric cohesin from separase-mediated cleavage in oocytes specifically during meiosis I. Can dephosphorylate various proteins, such as SV40 large T antigen, AXIN1, p53/TP53, PIM3, WEE1. Activates RAF1 by dephosphorylating it at 'Ser-259'. Mediates dephosphorylation of WEE1, preventing its ubiquitin-mediated proteolysis, increasing WEE1 protein levels, and promoting the G2/M checkpoint. Mediates dephosphorylation of MYC; promoting its ubiquitin-mediated proteolysis: interaction with AMBRA1 enhances interaction between PPP2CA and MYC. Mediates dephosphorylation of FOXO3; promoting its stabilization: interaction with AMBRA1 enhances interaction between PPP2CA and FOXO3. Catalyzes dephosphorylation of the pyrin domain of NLRP3, promoting assembly of the NLRP3 inflammasome. Together with RACK1 adapter, mediates dephosphorylation of AKT1 at 'Ser-473', preventing AKT1 activation and AKT-mTOR signaling pathway. Dephosphorylation of AKT1 is essential for regulatory T-cells (Treg) homeostasis and stability. Catalyzes dephosphorylation of PIM3, promotinh PIM3 ubiquitination and proteasomal degradation. Part of the striatin-interacting phosphatase and kinase (STRIPAK) complexes. STRIPAK complexes have critical roles in protein (de)phosphorylation and are regulators of multiple signaling pathways including Hippo, MAPK, nuclear receptor and cytoskeleton remodeling. Different types of STRIPAK complexes are involved in a variety of biological processes such as cell growth, differentiation, apoptosis, metabolism and immune regulation. Key mediator of a quality checkpoint during transcription elongation as part of the Integrator-PP2A (INTAC) complex. The INTAC complex drives premature transcription termination of transcripts that are unfavorably configured for transcriptional elongation: within the INTAC complex, PPP2CA catalyzes dephosphorylation of the C-terminal domain (CTD) of Pol II subunit POLR2A/RPB1 and SUPT5H/SPT5, thereby preventing transcriptional elongation. The protein is Serine/threonine-protein phosphatase 2A catalytic subunit alpha isoform (PPP2CA) of Homo sapiens (Human).